We begin with the raw amino-acid sequence, 158 residues long: Transcription elongation factor GreA (158 aa).

A coiled-coil region spans residues 49 to 73 (QAAREQQGFIEGRIKEIEAKLANAQ).

Belongs to the GreA/GreB family.

In terms of biological role, necessary for efficient RNA polymerase transcription elongation past template-encoded arresting sites. The arresting sites in DNA have the property of trapping a certain fraction of elongating RNA polymerases that pass through, resulting in locked ternary complexes. Cleavage of the nascent transcript by cleavage factors such as GreA or GreB allows the resumption of elongation from the new 3'terminus. GreA releases sequences of 2 to 3 nucleotides. This chain is Transcription elongation factor GreA, found in Methylococcus capsulatus (strain ATCC 33009 / NCIMB 11132 / Bath).